The primary structure comprises 333 residues: DnaJ homolog subfamily C member 25 homolog (333 aa).

Residues 8 to 28 (LVLLALLPTMALGLLEGLYCG) form a helical membrane-spanning segment. The J domain maps to 31 to 99 (NCYDVLGVTR…ESRTDYDYML (69 aa)). A helical transmembrane segment spans residues 123–143 (VRVVIVVVLTIVSVIQYYSGW). The stretch at 158 to 208 (KYRNQALEIARDEIQEKIQKKGKNRMSKNDQRDELERIIRRVIEEKMDVKG) forms a coiled coil. The chain crosses the membrane as a helical span at residues 218 to 238 (VLWVQLIICPYTILSFIVWHA).

Belongs to the DNAJC25 family.

It localises to the membrane. This chain is DnaJ homolog subfamily C member 25 homolog, found in Drosophila melanogaster (Fruit fly).